The chain runs to 1045 residues: Septation initiation network scaffold protein cdc11 (1045 aa).

Residues 1–11 (MEQLWLEHDLS) are compositionally biased toward basic and acidic residues. 2 disordered regions span residues 1–269 (MEQL…NTKD) and 282–329 (RGRM…PSLS). Residues 18 to 39 (PQEQGSDNSSEPPTTSNVNNTQ) are compositionally biased toward polar residues. 3 stretches are compositionally biased toward low complexity: residues 40 to 52 (STGR…STEH), 96 to 132 (KQSP…NVSN), and 152 to 165 (ISSS…SEGS). Positions 166 to 176 (LKSQQSNTRSN) are enriched in polar residues. Low complexity predominate over residues 187 to 201 (ASNASSSSSVVSSPS). Composition is skewed to polar residues over residues 226–238 (NQLT…NSFE) and 320–329 (DSSNAFPSLS). The residue at position 360 (Ser-360) is a Phosphoserine. The segment at 377-417 (DVGSSQSSSKTARLNSSPKSTLKTSSVKTRRSHSAQSSRKV) is disordered. Over residues 379–403 (GSSQSSSKTARLNSSPKSTLKTSSV) the composition is skewed to polar residues. Ser-558 is modified (phosphoserine). 15 LRR repeats span residues 604 to 625 (RIIQ…SELC), 627 to 646 (SIEE…GCPV), 647 to 668 (TIRD…SNLL), 669 to 690 (NLQY…SSLI), 691 to 712 (HLRE…QHLD), 713 to 734 (GLLK…NSNL), 736 to 757 (RLEE…SSLQ), 758 to 779 (NLMV…QPMI), 780 to 801 (HLRI…QFPH), 802 to 822 (LRTL…RRLK), 846 to 867 (DIRN…HMFL), 868 to 889 (GVRY…IATS), 892 to 913 (NLRV…KPLQ), 914 to 935 (MIHR…CDIL), and 940 to 962 (QLNV…IDDS). The region spanning 1005–1043 (AWRTRRKMYAEAILLACPHLEWLDGSDVSQSSRAAFTKS) is the LRRCT domain.

As to quaternary structure, interacts with sid4. When hyperphosphorylated, interacts with byr4. Also interacts with spg1, sid2, cdc13 and cdc16. In terms of processing, phosphorylated by cdc7 and cdk1. Hyperphosphorylated during anaphase. Dephosphorylated by par1.

The protein localises to the cytoplasm. It is found in the cytoskeleton. Its subcellular location is the microtubule organizing center. The protein resides in the spindle pole body. Functionally, essential for the onset of septum formation. Involved in the organization of astral microtubules during mitosis. Acts as a bridge between sid4 and the other SIN proteins mediating their association with the spindle pole body (SPB). The sid4-cdc11 complex organizes a signaling hub on the SPB which coordinates cell and nuclear division. The protein is Septation initiation network scaffold protein cdc11 (cdc11) of Schizosaccharomyces pombe (strain 972 / ATCC 24843) (Fission yeast).